A 255-amino-acid chain; its full sequence is RNA polymerase sigma-F factor (255 aa).

Residues 61–74 (DLFQIGCIGLLKSV) carry the Polymerase core binding motif. A DNA-binding region (H-T-H motif) is located at residues 221–240 (QSEVADRLGISQVQVSRLEK).

The protein belongs to the sigma-70 factor family.

Its function is as follows. Sigma factors are initiation factors that promote the attachment of RNA polymerase to specific initiation sites and are then released. This sigma factor is responsible for the expression of sporulation specific genes. The protein is RNA polymerase sigma-F factor (sigF) of Bacillus licheniformis.